The primary structure comprises 314 residues: MSVWAIGDLQGCYDITQRLLEKINFDPAQDTLWFCGDLVNRGGQSLETLRLVHSLRAHSVVVLGNHDLSLLAIGARSEEEQRKVNPDLLRIVMAEDRDALLDWLRMQKLAHVDRELGWMMIHAGLAPKWTTQMAEKHAREVEQQLQGGGYRKLLRNMYGDQPGWSPGLSGYDRSRAIINLFTRMRYCTPRGRIATDDKGTPGTQAQGLYPWFEVPGRVERDLKIVCGHWSALGLTITQGVHAIDTGAVWGGKLTALQLDTDELRVVQVPGNPITHPPKTAQRPRQPRRRQRQRGGDQAQTGPAPTPASTGPAGG.

Residues 267-314 (QVPGNPITHPPKTAQRPRQPRRRQRQRGGDQAQTGPAPTPASTGPAGG) are disordered. A compositionally biased stretch (low complexity) spans 297–314 (QAQTGPAPTPASTGPAGG).

Belongs to the Ap4A hydrolase family.

The catalysed reaction is P(1),P(4)-bis(5'-adenosyl) tetraphosphate + H2O = 2 ADP + 2 H(+). Functionally, hydrolyzes diadenosine 5',5'''-P1,P4-tetraphosphate to yield ADP. In Xanthomonas axonopodis pv. citri (strain 306), this protein is Bis(5'-nucleosyl)-tetraphosphatase, symmetrical.